Here is a 188-residue protein sequence, read N- to C-terminus: Large ribosomal subunit protein eL18 (188 aa).

A disordered region spans residues 147-188 (EAEKHFGPAPGVPHSHTKPYVRSKGRKFERARGRRASRAYKN). 2 stretches are compositionally biased toward basic residues: residues 161-171 (SHTKPYVRSKG) and 178-188 (RGRRASRAYKN).

The protein belongs to the eukaryotic ribosomal protein eL18 family.

The protein resides in the cytoplasm. In Caenorhabditis elegans, this protein is Large ribosomal subunit protein eL18 (rpl-18).